Reading from the N-terminus, the 119-residue chain is Acidic phospholipase A2 2 (119 aa).

7 disulfide bridges follow: Cys11-Cys71, Cys26-Cys118, Cys28-Cys44, Cys43-Cys99, Cys50-Cys92, Cys60-Cys85, and Cys78-Cys90. Ca(2+)-binding residues include Tyr27, Gly29, and Gly31. His47 is an active-site residue. Residue Asp48 coordinates Ca(2+). The active site involves Asp93.

Belongs to the phospholipase A2 family. Group I subfamily. D49 sub-subfamily. In terms of assembly, homotrimer. The cofactor is Ca(2+). In terms of tissue distribution, expressed by the venom gland.

It is found in the secreted. It carries out the reaction a 1,2-diacyl-sn-glycero-3-phosphocholine + H2O = a 1-acyl-sn-glycero-3-phosphocholine + a fatty acid + H(+). Functionally, PLA2 catalyzes the calcium-dependent hydrolysis of the 2-acyl groups in 3-sn-phosphoglycerides. This is Acidic phospholipase A2 2 from Naja naja (Indian cobra).